Here is a 251-residue protein sequence, read N- to C-terminus: Protein DEEPER ROOTING 1 (251 aa).

Residues 46-52 (SLLAIGT) carry the IGT motif motif. Residues 64–105 (VENSSDNVQSVQDTVKFTEEEVDKIRKEFETLLAIKDQAEAQ) adopt a coiled-coil conformation.

This sequence belongs to the LAZY family.

Involved in the control of root growth angle. Involved in cell elongation in the root tip that causes asymmetric root growth and downward bending of the root in response to gravity. The protein is Protein DEEPER ROOTING 1 of Oryza sativa subsp. japonica (Rice).